The chain runs to 147 residues: MDVLHGHDLYDEQLIDRVGDAVNEDAGDDLDTLEDGQQQQRLGVNRQMDILLDAPQEPPLGVFPAQGGPNGPPRRRKKRSFYTMTKPTPPCQSQEPEMCLLMASVTRAMRHVREDQRGEYFANYLVENMTSQNYPNGMGLPQHWGQF.

The tract at residues proline 55 to serine 93 is disordered. Residues tyrosine 82–serine 93 are compositionally biased toward polar residues. Asparagine 128 is a glycosylation site (N-linked (GlcNAc...) asparagine).

It belongs to the male-specific scotti family. As to expression, expressed in primary spermatocytes and round spermatids. Low expression is seen in very short elongating cysts, but were detected at high levels in a few longer spermatid cysts.

Post-meiotically transcribed gene that has a role in late spermiogenesis; required for actin cone progression during spermatid individualization. The chain is Male-specific protein scotti from Drosophila melanogaster (Fruit fly).